A 339-amino-acid polypeptide reads, in one-letter code: D-erythrose-4-phosphate dehydrogenase (339 aa).

Residue 12 to 13 (RI) participates in NAD(+) binding. Residues 154–156 (SCT), Arg-200, 213–214 (TK), and Arg-236 each bind substrate. The Nucleophile role is filled by Cys-155. Asn-318 is a binding site for NAD(+).

It belongs to the glyceraldehyde-3-phosphate dehydrogenase family. Epd subfamily. As to quaternary structure, homotetramer.

The protein resides in the cytoplasm. It catalyses the reaction D-erythrose 4-phosphate + NAD(+) + H2O = 4-phospho-D-erythronate + NADH + 2 H(+). It participates in cofactor biosynthesis; pyridoxine 5'-phosphate biosynthesis; pyridoxine 5'-phosphate from D-erythrose 4-phosphate: step 1/5. Its function is as follows. Catalyzes the NAD-dependent conversion of D-erythrose 4-phosphate to 4-phosphoerythronate. This chain is D-erythrose-4-phosphate dehydrogenase, found in Proteus mirabilis (strain HI4320).